Consider the following 1212-residue polypeptide: Solute carrier family 12 member 2 (1212 aa).

Residue M1 is modified to N-acetylmethionine. Residues 1–286 (MEPRPTAPSS…AESKGVVKFG (286 aa)) lie on the Cytoplasmic side of the membrane. Disordered stretches follow at residues 36–81 (GTAV…QSRF), 112–138 (GAKQTPADGEASGESEPAKGSEEAKGR), and 150–193 (SSAE…GGGS). 2 positions are modified to phosphoserine: S77 and S79. Residues 80–83 (RFQV) carry the RFXV motif 1 motif. Residues 127–137 (EPAKGSEEAKG) show a composition bias toward basic and acidic residues. Residues 138-141 (RFRV) carry the RFXV motif 2 motif. Positions 150 to 160 (SSAEDSLSDAA) are enriched in low complexity. Residues T203, T207, and T212 each carry the phosphothreonine; by OXSR1 and STK39 modification. T217 and T230 each carry phosphothreonine. S242 is modified (phosphoserine). T266 bears the Phosphothreonine mark. A discontinuously helical transmembrane segment spans residues 287-316 (WIKGVLVRCMLNIWGVMLFIRLSWIVGQAG). L297 provides a ligand contact to Na(+). Positions 298 and 299 each coordinate K(+). W300 lines the Na(+) pocket. G301, V302, and M303 together coordinate chloride. Residues 317 to 336 (IGLSVLVIMMATVVTTITGL) traverse the membrane as a helical segment. Residues 337 to 367 (STSAIATNGFVRGGGAYYLISRSLGPEFGGA) are Cytoplasmic-facing. The chain crosses the membrane as a helical span at residues 368 to 395 (IGLIFAFANAVAVAMYVVGFAETVVELL). A chloride-binding site is contributed by F372. K(+) is bound at residue Y383. Residues 396 to 405 (KEHSILMIDE) are Extracellular-facing. The chain crosses the membrane as a helical span at residues 406–429 (INDIRIIGAITVVILLGISVAGME). The Cytoplasmic portion of the chain corresponds to 430 to 432 (WEA). Residues 433 to 454 (KAQIVLLVILLLAIGDFVIGTF) form a helical membrane-spanning segment. Over 455 to 486 (IPLESKKPKGFFGYKSEIFNENFGPDFREEET) the chain is Extracellular. Residues 487 to 504 (FFSVFAIFFPAATGILAG) form a discontinuously helical membrane-spanning segment. 3 residues coordinate K(+): P496, A497, and T499. Positions 496 and 497 each coordinate chloride. Positions 500 and 501 each coordinate chloride. Residues 505-519 (ANISGDLADPQSAIP) are Cytoplasmic-facing. Residues 520 to 541 (KGTLLAILITTLVYVGIAVSVG) form a helical membrane-spanning segment. At 542 to 598 (SCVVRDATGNVNDTIVTELTNCTSAACKLNFDFSSCESSPCSYGLMNNFQVMSMVSG) the chain is on the extracellular side. N-linked (GlcNAc...) asparagine glycans are attached at residues N553 and N562. 2 cysteine pairs are disulfide-bonded: C563–C568 and C577–C582. Residues 599–623 (FTPLISAGIFSATLSSALASLVSAP) traverse the membrane as a helical segment. Residues A610, S613, and S614 each coordinate Na(+). The Cytoplasmic portion of the chain corresponds to 624-651 (KIFQALCKDNIYPAFQMFAKGYGKNNEP). The next 2 membrane-spanning stretches (helical) occupy residues 652-672 (LRGYILTFLIALGFILIAELN) and 673-691 (VIAPIISNFFLASYALINF). F682 and Y686 together coordinate chloride. The Cytoplasmic segment spans residues 692–714 (SVFHASLAKSPGWRPAFKYYNMW). 2 helical membrane-spanning segments follow: residues 715 to 732 (ISLLGAILCCIVMFVINW) and 733 to 745 (WAALLTYVIVLGL). Over 746-1212 (YIYVTYKKPD…NHQSVLTFYS (467 aa)) the chain is Cytoplasmic. The interval 761–778 (STQALTYLNALQHSIRLS) is scissor helix. Residues S940 and S944 each carry the phosphoserine modification. Positions 962–978 (LDTSKPLSEKPITHKVE) are enriched in basic and acidic residues. Positions 962-989 (LDTSKPLSEKPITHKVEEEDGKTATQPL) are disordered. At S994 the chain carries Phosphoserine.

Belongs to the SLC12A transporter family. As to quaternary structure, homodimer; adopts a domain-swap conformation at the scissor helices connecting the transmembrane domain and C-terminal domain. Phosphorylated at Thr-203, Thr-207 and Thr-212 by OXSR1/OSR1 and STK39/SPAK downstream of WNK kinases (WNK1, WNK2, WNK3 or WNK4), promoting its activity. Expressed in many tissues.

It is found in the basolateral cell membrane. It catalyses the reaction K(+)(out) + 2 chloride(out) + Na(+)(out) = K(+)(in) + 2 chloride(in) + Na(+)(in). With respect to regulation, activated following phosphorylation by OXSR1/OSR1 and STK39/SPAK downstream of WNK kinases (WNK1, WNK2, WNK3 or WNK4). Inhibited by bumetanide. Inhibited by furosemide. Cation-chloride cotransporter which mediates the electroneutral transport of chloride, potassium and/or sodium ions across the membrane. Plays a vital role in the regulation of ionic balance and cell volume. The chain is Solute carrier family 12 member 2 (SLC12A2) from Homo sapiens (Human).